A 101-amino-acid polypeptide reads, in one-letter code: Small ribosomal subunit protein uS14 (101 aa).

This sequence belongs to the universal ribosomal protein uS14 family. In terms of assembly, part of the 30S ribosomal subunit. Contacts proteins S3 and S10.

In terms of biological role, binds 16S rRNA, required for the assembly of 30S particles and may also be responsible for determining the conformation of the 16S rRNA at the A site. This Escherichia coli O8 (strain IAI1) protein is Small ribosomal subunit protein uS14.